The primary structure comprises 302 residues: GTPase Era (302 aa).

The region spanning 8–175 (HSGFVAIIGR…LTTLKGQLPE (168 aa)) is the Era-type G domain. Residues 16-23 (GRPNVGKS) form a G1 region. 16-23 (GRPNVGKS) is a GTP binding site. The tract at residues 42-46 (QTTRN) is G2. The interval 63 to 66 (DTPG) is G3. Residues 63–67 (DTPGI) and 125–128 (NKID) contribute to the GTP site. Positions 125–128 (NKID) are G4. The interval 154-156 (ISA) is G5. The 78-residue stretch at 206–283 (TRQEVPHSTA…YLELWVKVQE (78 aa)) folds into the KH type-2 domain.

Belongs to the TRAFAC class TrmE-Era-EngA-EngB-Septin-like GTPase superfamily. Era GTPase family. Monomer.

It localises to the cytoplasm. It is found in the cell membrane. Its function is as follows. An essential GTPase that binds both GDP and GTP, with rapid nucleotide exchange. Plays a role in 16S rRNA processing and 30S ribosomal subunit biogenesis and possibly also in cell cycle regulation and energy metabolism. The polypeptide is GTPase Era (Lactiplantibacillus plantarum (strain ATCC BAA-793 / NCIMB 8826 / WCFS1) (Lactobacillus plantarum)).